Here is a 266-residue protein sequence, read N- to C-terminus: Dihydropteroate synthase (266 aa).

The Pterin-binding domain maps to 12 to 260 (AAIMGILNVT…DVKANQDIVA (249 aa)). Residue Asn-19 coordinates Mg(2+). (7,8-dihydropterin-6-yl)methyl diphosphate is bound by residues Thr-59, Asp-93, Asn-112, Asp-176, Lys-212, and 248 to 250 (RVH).

This sequence belongs to the DHPS family. Homodimer or homotrimer. Mg(2+) is required as a cofactor.

The enzyme catalyses (7,8-dihydropterin-6-yl)methyl diphosphate + 4-aminobenzoate = 7,8-dihydropteroate + diphosphate. The protein operates within cofactor biosynthesis; tetrahydrofolate biosynthesis; 7,8-dihydrofolate from 2-amino-4-hydroxy-6-hydroxymethyl-7,8-dihydropteridine diphosphate and 4-aminobenzoate: step 1/2. Its function is as follows. Catalyzes the condensation of para-aminobenzoate (pABA) with 6-hydroxymethyl-7,8-dihydropterin diphosphate (DHPt-PP) to form 7,8-dihydropteroate (H2Pte), the immediate precursor of folate derivatives. This Streptococcus pyogenes serotype M6 (strain ATCC BAA-946 / MGAS10394) protein is Dihydropteroate synthase (folP).